The following is a 1212-amino-acid chain: Peregrin (1212 aa).

A C2H2-type zinc finger spans residues 21-47 (YECPVETCRKVYKSYSGIEYHLYHYDH). Disordered stretches follow at residues 43-87 (YHYD…SPGR) and 118-176 (VVSE…PKLP). The span at 58–67 (LRKHKKKGRQ) shows a compositional bias: basic residues. The tract at residues 59-221 (RKHKKKGRQS…VEYDMDEEDY (163 aa)) is interaction with KAT6A and KAT6B. A compositionally biased stretch (low complexity) spans 74 to 85 (QSPSPSEVSQSP). A compositionally biased stretch (acidic residues) spans 119–130 (VSEDEEAPEEAP). Ser120 carries the phosphoserine modification. Lys147 carries the N6-acetyllysine modification. The segment covering 148 to 166 (SGKHKNKEKRKDSNHHHHS) has biased composition (basic residues). The residue at position 237 (Ser237) is a Phosphoserine. The PHD-type 1 zinc finger occupies 272 to 322 (DAVCCICNDGECQNSNVILFCDMCNLAVHQECYGVPYIPEGQWLCRRCLQS). The C2HC pre-PHD-type zinc-finger motif lies at 326-359 (AVDCALCPNKGGAFKQTDDGRWAHVVCALWIPEV). The PHD-type 2 zinc finger occupies 383 to 447 (LTCYICKQRG…RKTAYCDIHT (65 aa)). Residues 447 to 489 (TPPGSARRLPALSHSEGEEEEDEEEDEGKSWSSEKVKKAKAKS) form a disordered region. Ser459 and Ser461 each carry phosphoserine. Residues 463–473 (GEEEEDEEEDE) show a composition bias toward acidic residues. The interaction with MEAF6 and ING5 stretch occupies residues 500–819 (LAEKRAAAPV…IKKEMTALRR (320 aa)). Residues 542 to 1077 (YWTLKRQSRN…RGAGWLSEDE (536 aa)) form a required for RUNX1 and RUNX2 transcriptional activation region. Lys579 is subject to N6-acetyllysine. A Bromo domain is found at 627-731 (MQLTPFLILL…EQGGAVLRQA (105 aa)). Residues 817-1060 (LRRKLAHQRE…VGTGRGVGHS (244 aa)) form a disordered region. Basic and acidic residues predominate over residues 823–836 (HQRETGRDGPERHG). Thr856 carries the post-translational modification Phosphothreonine. The segment covering 856–869 (TDSAAEESSSQETS) has biased composition (low complexity). Ser858, Ser915, Ser920, and Ser924 each carry phosphoserine. Low complexity predominate over residues 993-1019 (PRSSSDSESSSSSSSSAASDRTSTTPS). The residue at position 1074 (Ser1074) is a Phosphoserine. The 84-residue stretch at 1083 to 1166 (ALDLVWAKCR…RTKLVPLGVN (84 aa)) folds into the PWWP domain. Ser1185 is subject to Phosphoserine.

Component of some HBO1 complex composed of KAT7/HBO1, MEAF6, ING5, and BRPF1. Component of the MOZ/MORF complex composed at least of ING5, KAT6A, KAT6B, MEAF6 and one of BRPF1, BRD1/BRPF2 and BRPF3. Interacts (via PHD-type zinc finger domains) with unmethylated histone H3 at 'Lys-4' (H3K4me0). Interacts with trimethylated 'Lys-36' of histone H3 (H3K36me3). Interacts with ING5; interaction directs BRPF1 to H4K4me3-enriched chromatin at the 5' of active genes. Interacts with KAT7. Acetylated by KAT6A. Expressed at low level in most tissues, with high expression in the testis and specific regions of the brain.

Its subcellular location is the nucleus. It is found in the chromosome. The protein localises to the cytoplasm. In terms of biological role, scaffold subunit of various histone acetyltransferase (HAT) complexes, such as the MOZ/MORF and HBO1 complexes, which have a histone H3 acetyltransferase activity. Plays a key role in HBO1 complex by directing KAT7/HBO1 specificity towards histone H3 'Lys-14' acetylation (H3K14ac). Some HAT complexes preferentially mediate histone H3 'Lys-23' (H3K23ac) acetylation. Positively regulates the transcription of RUNX1 and RUNX2. This is Peregrin from Mus musculus (Mouse).